The chain runs to 235 residues: Venom metalloproteinase antarease-like TserMP_B (235 aa).

Residues 4-233 (IVVEYYIVTD…PTASCIFQQC (230 aa)) enclose the Peptidase M12B domain. An intrachain disulfide couples Cys137 to Cys228. His161 provides a ligand contact to Zn(2+). Residue Glu162 is part of the active site. Positions 165 and 171 each coordinate Zn(2+).

Belongs to the venom metalloproteinase (M12B) family. Zn(2+) serves as cofactor. Expressed by the venom gland.

The protein resides in the secreted. With respect to regulation, inhibited by EDTA. In terms of biological role, acts as a metalloprotease. Penetrates intact tissue and specifically cleaves the vesicle-associated membrane protein 2 (VAMP2) (part of the SNARE complex) involved in pancreatic secretion, thus disrupting the normal vesicular traffic. This is Venom metalloproteinase antarease-like TserMP_B from Tityus serrulatus (Brazilian scorpion).